The chain runs to 75 residues: Protein EGO2 (75 aa).

This is Protein EGO2 from Saccharomyces cerevisiae (strain ATCC 204508 / S288c) (Baker's yeast).